Reading from the N-terminus, the 156-residue chain is Small ribosomal subunit protein uS7 (156 aa).

The protein belongs to the universal ribosomal protein uS7 family. Part of the 30S ribosomal subunit. Contacts proteins S9 and S11.

One of the primary rRNA binding proteins, it binds directly to 16S rRNA where it nucleates assembly of the head domain of the 30S subunit. Is located at the subunit interface close to the decoding center, probably blocks exit of the E-site tRNA. This is Small ribosomal subunit protein uS7 from Synechocystis sp. (strain ATCC 27184 / PCC 6803 / Kazusa).